The primary structure comprises 89 residues: Small ribosomal subunit protein uS15 (89 aa).

The protein belongs to the universal ribosomal protein uS15 family. As to quaternary structure, part of the 30S ribosomal subunit. Forms a bridge to the 50S subunit in the 70S ribosome, contacting the 23S rRNA.

In terms of biological role, one of the primary rRNA binding proteins, it binds directly to 16S rRNA where it helps nucleate assembly of the platform of the 30S subunit by binding and bridging several RNA helices of the 16S rRNA. Forms an intersubunit bridge (bridge B4) with the 23S rRNA of the 50S subunit in the ribosome. The sequence is that of Small ribosomal subunit protein uS15 from Photorhabdus luminescens (Xenorhabdus luminescens).